The chain runs to 345 residues: 4-hydroxyproline 2-epimerase (345 aa).

Substrate is bound at residue Q85. The active-site Proton acceptor is the S93. Residues 94–95 (GS) and D251 each bind substrate. Catalysis depends on C255, which acts as the Proton donor. A substrate-binding site is contributed by 256 to 257 (GT).

Belongs to the proline racemase family.

The catalysed reaction is trans-4-hydroxy-L-proline = cis-4-hydroxy-D-proline. Its function is as follows. Catalyzes the epimerization of trans-4-hydroxy-L-proline (t4LHyp) to cis-4-hydroxy-D-proline (c4DHyp). May be involved in a degradation pathway of t4LHyp. Can also catalyze the epimerization of trans-3-hydroxy-L-proline (t3LHyp) to cis-3-hydroxy-D-proline (c3DHyp) in vitro, albeit with 2-fold lower efficiency. Displays no proline racemase activity. This is 4-hydroxyproline 2-epimerase from Rhizobium etli (strain ATCC 51251 / DSM 11541 / JCM 21823 / NBRC 15573 / CFN 42).